An 81-amino-acid chain; its full sequence is Protein RADIALIS-like 3 (81 aa).

Residues 7 to 62 (SSSASWTRKENKLFERALATYDQDTPDRWHNVARAVGGKSAEEVRRHYELLIRDVN) enclose the SANT domain.

In terms of tissue distribution, expressed just outside the vascular bundles in the rosette stem and the leaf traces. Not detected in floral primordia.

The protein localises to the nucleus. Functionally, probable transcription factor. The sequence is that of Protein RADIALIS-like 3 (RL3) from Arabidopsis thaliana (Mouse-ear cress).